The following is a 193-amino-acid chain: MTDYLLLFVGTVLVNNFVLVKFLGLCPFMGVSKKLETAMGMGLATTFVMTLTSICAWLIDTWILIPLNLIYLRTLAFILVIAVVVQFTEMVVRKTSPVLYRLLGIFLPLITTNCAVLGVALLNINLGHNFLQSALYGFSAAVGFSLVMVLFAAIRERLAVADVPAPFRGNAIALITAGLMSLAFMGFSGLVKL.

Helical transmembrane passes span 5–25 (LLLF…FLGL), 39–59 (MGMG…AWLI), 63–83 (ILIP…VIAV), 102–122 (LLGI…VALL), 134–154 (ALYG…FAAI), and 171–191 (AIAL…SGLV).

The protein belongs to the NqrDE/RnfAE family. As to quaternary structure, the complex is composed of six subunits: RsxA, RsxB, RsxC, RsxD, RsxE and RsxG.

The protein resides in the cell inner membrane. Functionally, part of a membrane-bound complex that couples electron transfer with translocation of ions across the membrane. Required to maintain the reduced state of SoxR. This Shigella flexneri serotype 5b (strain 8401) protein is Ion-translocating oxidoreductase complex subunit A.